A 384-amino-acid polypeptide reads, in one-letter code: Secreted effector protein EspF(U) (384 aa).

Tandem repeats lie at residues 96–142 (IXPA…AEHG), 143–189 (IQPA…AEHG), 190–236 (IQPA…AEHG), 237–283 (IZPA…AEHG), 284–330 (IQPA…AEHG), and 331–377 (IQPA…AEHG). The tract at residues 96–377 (IXPARSMAEH…RLMQHLAEHG (282 aa)) is 6 X 48 AA approximate tandem repeats. A disordered region spans residues 247–266 (IPPAPNWPAPPPPVQNEQSR). A compositionally biased stretch (pro residues) spans 248-260 (PPAPNWPAPPPPV).

This sequence belongs to the EspF(U)/TccP family. Interacts with host BAIAP2 and host WASL/N-WASP. Can also interact with host proteins BAIAP2L1 and WAS/WASP.

The protein localises to the secreted. Its subcellular location is the host cytoplasm. In terms of biological role, required for efficient pedestal formation in host epithelial cells during infection. Acts as an intermediate between Tir (via host BAIAP2) and host WASL/N-WASP. Directly binds and activates WASL/N-WASP, which stimulates actin polymerization and leads to the formation of actin pedestals at the sites of bacterial adhesion. The polypeptide is Secreted effector protein EspF(U) (espF(U)) (Escherichia coli O157:H7).